The following is a 69-amino-acid chain: Neurotoxin Cex5 (69 aa).

A1 is a signal peptide. The LCN-type CS-alpha/beta domain occupies 2–67; sequence KDGYLVSKST…TYPIPGKSCG (66 aa). 4 cysteine pairs are disulfide-bonded: C13/C66, C17/C42, C26/C47, and C30/C49. A Cysteine amide modification is found at C66. Residues 67–69 constitute a propeptide that is removed on maturation; sequence GKK.

This sequence belongs to the long (4 C-C) scorpion toxin superfamily. Sodium channel inhibitor family. Beta subfamily. Expressed by the venom gland.

It is found in the secreted. Beta toxins bind voltage-independently at site-4 of sodium channels (Nav) and shift the voltage of activation toward more negative potentials thereby affecting sodium channel activation and promoting spontaneous and repetitive firing. The sequence is that of Neurotoxin Cex5 from Centruroides exilicauda (Bark scorpion).